We begin with the raw amino-acid sequence, 263 residues long: Tryptophan synthase alpha chain (263 aa).

Catalysis depends on proton acceptor residues glutamate 49 and aspartate 60.

The protein belongs to the TrpA family. In terms of assembly, tetramer of two alpha and two beta chains.

It carries out the reaction (1S,2R)-1-C-(indol-3-yl)glycerol 3-phosphate + L-serine = D-glyceraldehyde 3-phosphate + L-tryptophan + H2O. It participates in amino-acid biosynthesis; L-tryptophan biosynthesis; L-tryptophan from chorismate: step 5/5. The alpha subunit is responsible for the aldol cleavage of indoleglycerol phosphate to indole and glyceraldehyde 3-phosphate. This is Tryptophan synthase alpha chain from Roseobacter denitrificans (strain ATCC 33942 / OCh 114) (Erythrobacter sp. (strain OCh 114)).